The primary structure comprises 208 residues: 2-phospho-L-lactate guanylyltransferase (208 aa).

Belongs to the CofC family. In terms of assembly, homodimer.

It carries out the reaction (2S)-2-phospholactate + GTP + H(+) = (2S)-lactyl-2-diphospho-5'-guanosine + diphosphate. Its pathway is cofactor biosynthesis; coenzyme F420 biosynthesis. Functionally, guanylyltransferase that catalyzes the activation of (2S)-2-phospholactate (2-PL) as (2S)-lactyl-2-diphospho-5'-guanosine, via the condensation of 2-PL with GTP. It is involved in the biosynthesis of coenzyme F420, a hydride carrier cofactor. The protein is 2-phospho-L-lactate guanylyltransferase of Methanosarcina mazei (strain ATCC BAA-159 / DSM 3647 / Goe1 / Go1 / JCM 11833 / OCM 88) (Methanosarcina frisia).